A 515-amino-acid polypeptide reads, in one-letter code: Phospholipase A1-Igamma1, chloroplastic (515 aa).

The transit peptide at 1-44 (MATIPSHNLRPHTTNQRTQYSLSFRPHFSRSTLITFPARSSPAR) directs the protein to the chloroplast. The GXSXG motif lies at 301-305 (GHSLG). Residue S303 is the Acyl-ester intermediate of the active site. Active-site charge relay system residues include D366 and H422.

This sequence belongs to the AB hydrolase superfamily. Lipase family. As to expression, ubiquitous. Highly expressed in leaves.

Its subcellular location is the plastid. It is found in the chloroplast. The enzyme catalyses 1,2-dihexadecanoyl-sn-glycero-3-phosphocholine + H2O = 2-hexadecanoyl-sn-glycero-3-phosphocholine + hexadecanoate + H(+). It carries out the reaction a 1,2-diacyl-3-O-(beta-D-galactosyl)-sn-glycerol + H2O = an acyl-3-O-(beta-D-galactosyl)-sn-glycerol + a fatty acid + H(+). The catalysed reaction is a 1,2-diacyl-3-O-[alpha-D-galactosyl-(1-&gt;6)-beta-D-galactosyl]-sn-glycerol + H2O = acyl-3-O-[alpha-D-galactosyl-(1-&gt;6)-beta-D-galactosyl]-sn-glycerol + a fatty acid + H(+). Acylhydrolase with a broad specificity. Catalyzes the hydrolysis of phosphatidylcholine at the sn-1 position. Moderate activity toward phosphatidylcholine (PC), monogalactosyldiacylglycerol (MGDG), digalactosyldiacylglycerol (DGDG) and triacylglycerol (TAG). May display dual sn-1/sn-2 substrate specificity. Could be involved in early wound response. This is Phospholipase A1-Igamma1, chloroplastic from Arabidopsis thaliana (Mouse-ear cress).